We begin with the raw amino-acid sequence, 507 residues long: ATP synthase subunit alpha, chloroplastic (507 aa).

An ATP-binding site is contributed by 170 to 177 (GDRQTGKT).

This sequence belongs to the ATPase alpha/beta chains family. F-type ATPases have 2 components, CF(1) - the catalytic core - and CF(0) - the membrane proton channel. CF(1) has five subunits: alpha(3), beta(3), gamma(1), delta(1), epsilon(1). CF(0) has four main subunits: a, b, b' and c.

It localises to the plastid. The protein localises to the chloroplast thylakoid membrane. The enzyme catalyses ATP + H2O + 4 H(+)(in) = ADP + phosphate + 5 H(+)(out). In terms of biological role, produces ATP from ADP in the presence of a proton gradient across the membrane. The alpha chain is a regulatory subunit. The protein is ATP synthase subunit alpha, chloroplastic of Daucus carota (Wild carrot).